A 495-amino-acid chain; its full sequence is Trigger factor (495 aa).

In terms of domain architecture, PPIase FKBP-type spans 162–243; that stretch reads DDFVSIDLSA…VKSLKERELP (82 aa). A compositionally biased stretch (basic and acidic residues) spans 425 to 437; it reads DTDGNEIDPKEYF. Positions 425-495 are disordered; the sequence is DTDGNEIDPK…TDDDSENAEK (71 aa). A compositionally biased stretch (low complexity) spans 450-461; that stretch reads SADAEASENSEA. A compositionally biased stretch (acidic residues) spans 486 to 495; it reads TDDDSENAEK.

This sequence belongs to the FKBP-type PPIase family. Tig subfamily.

Its subcellular location is the cytoplasm. The enzyme catalyses [protein]-peptidylproline (omega=180) = [protein]-peptidylproline (omega=0). Functionally, involved in protein export. Acts as a chaperone by maintaining the newly synthesized protein in an open conformation. Functions as a peptidyl-prolyl cis-trans isomerase. In Corynebacterium kroppenstedtii (strain DSM 44385 / JCM 11950 / CIP 105744 / CCUG 35717), this protein is Trigger factor.